The primary structure comprises 470 residues: Membrane-bound lytic murein transglycosylase F (470 aa).

The first 21 residues, 1–21 (MLKEKLIIIITLVMLLCACDI), serve as a signal peptide directing secretion. Positions 22–259 (QEQSTQLAQI…VLEEKYFGHV (238 aa)) are non-LT domain. An LT domain region spans residues 260–470 (RQFNYVNTLA…PKIGDEVEAK (211 aa)). Glu-304 is an active-site residue.

It in the N-terminal section; belongs to the bacterial solute-binding protein 3 family. This sequence in the C-terminal section; belongs to the transglycosylase Slt family.

It is found in the cell outer membrane. It catalyses the reaction Exolytic cleavage of the (1-&gt;4)-beta-glycosidic linkage between N-acetylmuramic acid (MurNAc) and N-acetylglucosamine (GlcNAc) residues in peptidoglycan, from either the reducing or the non-reducing ends of the peptidoglycan chains, with concomitant formation of a 1,6-anhydrobond in the MurNAc residue.. Functionally, murein-degrading enzyme that degrades murein glycan strands and insoluble, high-molecular weight murein sacculi, with the concomitant formation of a 1,6-anhydromuramoyl product. Lytic transglycosylases (LTs) play an integral role in the metabolism of the peptidoglycan (PG) sacculus. Their lytic action creates space within the PG sacculus to allow for its expansion as well as for the insertion of various structures such as secretion systems and flagella. The chain is Membrane-bound lytic murein transglycosylase F from Pseudoalteromonas translucida (strain TAC 125).